A 499-amino-acid polypeptide reads, in one-letter code: Cytochrome P450 77A1 (499 aa).

Position 443 (C443) interacts with heme.

The protein belongs to the cytochrome P450 family. Heme serves as cofactor.

In Solanum melongena (Eggplant), this protein is Cytochrome P450 77A1 (CYP77A1).